Here is a 227-residue protein sequence, read N- to C-terminus: Phosphoribosylformylglycinamidine synthase subunit PurQ (227 aa).

A Glutamine amidotransferase type-1 domain is found at 3-225; that stretch reads FAVIVFPGSN…LKQWRETYVV (223 aa). C86 acts as the Nucleophile in catalysis. Active-site residues include H194 and E196.

In terms of assembly, part of the FGAM synthase complex composed of 1 PurL, 1 PurQ and 2 PurS subunits.

The protein localises to the cytoplasm. The catalysed reaction is N(2)-formyl-N(1)-(5-phospho-beta-D-ribosyl)glycinamide + L-glutamine + ATP + H2O = 2-formamido-N(1)-(5-O-phospho-beta-D-ribosyl)acetamidine + L-glutamate + ADP + phosphate + H(+). It catalyses the reaction L-glutamine + H2O = L-glutamate + NH4(+). It functions in the pathway purine metabolism; IMP biosynthesis via de novo pathway; 5-amino-1-(5-phospho-D-ribosyl)imidazole from N(2)-formyl-N(1)-(5-phospho-D-ribosyl)glycinamide: step 1/2. In terms of biological role, part of the phosphoribosylformylglycinamidine synthase complex involved in the purines biosynthetic pathway. Catalyzes the ATP-dependent conversion of formylglycinamide ribonucleotide (FGAR) and glutamine to yield formylglycinamidine ribonucleotide (FGAM) and glutamate. The FGAM synthase complex is composed of three subunits. PurQ produces an ammonia molecule by converting glutamine to glutamate. PurL transfers the ammonia molecule to FGAR to form FGAM in an ATP-dependent manner. PurS interacts with PurQ and PurL and is thought to assist in the transfer of the ammonia molecule from PurQ to PurL. This chain is Phosphoribosylformylglycinamidine synthase subunit PurQ, found in Bacillus cereus (strain 03BB102).